The following is a 260-amino-acid chain: Membrane protein insertase YidC 1 (260 aa).

A signal peptide spans 1–22 (MLKSYRAVLVSLSLLLVFVLSG). Residue C23 is the site of N-palmitoyl cysteine attachment. C23 is lipidated: S-diacylglycerol cysteine. A run of 5 helical transmembrane segments spans residues 29 to 49 (IDAH…SFMI), 52 to 72 (VAHH…TLVI), 133 to 153 (LAGC…YYAI), 164 to 184 (FLWV…IAAL), and 213 to 233 (MPAM…LYWI).

Belongs to the OXA1/ALB3/YidC family. Type 2 subfamily.

The protein localises to the cell membrane. Required for the insertion and/or proper folding and/or complex formation of integral membrane proteins into the membrane. Involved in integration of membrane proteins that insert both dependently and independently of the Sec translocase complex, as well as at least some lipoproteins. The protein is Membrane protein insertase YidC 1 of Bacillus anthracis.